The following is a 122-amino-acid chain: Large ribosomal subunit protein uL18 (122 aa).

Residues 1–26 are disordered; it reads MSNLSRKQQTQKRHRRLRRHLKGTAQ. Residues 9-22 show a composition bias toward basic residues; sequence QTQKRHRRLRRHLK.

This sequence belongs to the universal ribosomal protein uL18 family. Part of the 50S ribosomal subunit; part of the 5S rRNA/L5/L18/L25 subcomplex. Contacts the 5S and 23S rRNAs.

Its function is as follows. This is one of the proteins that bind and probably mediate the attachment of the 5S RNA into the large ribosomal subunit, where it forms part of the central protuberance. The polypeptide is Large ribosomal subunit protein uL18 (Prochlorococcus marinus (strain MIT 9313)).